A 186-amino-acid chain; its full sequence is Peptide deformylase (186 aa).

Cysteine 113 and histidine 156 together coordinate Fe cation. Residue glutamate 157 is part of the active site. Histidine 160 serves as a coordination point for Fe cation.

This sequence belongs to the polypeptide deformylase family. It depends on Fe(2+) as a cofactor.

It catalyses the reaction N-terminal N-formyl-L-methionyl-[peptide] + H2O = N-terminal L-methionyl-[peptide] + formate. In terms of biological role, removes the formyl group from the N-terminal Met of newly synthesized proteins. Requires at least a dipeptide for an efficient rate of reaction. N-terminal L-methionine is a prerequisite for activity but the enzyme has broad specificity at other positions. The polypeptide is Peptide deformylase (Levilactobacillus brevis (strain ATCC 367 / BCRC 12310 / CIP 105137 / JCM 1170 / LMG 11437 / NCIMB 947 / NCTC 947) (Lactobacillus brevis)).